The following is a 1583-amino-acid chain: Protein mesh (1583 aa).

A signal peptide spans 1–21 (MGVKIKLVLAVVLILSANVLG). Residues 22 to 1182 (QDEIVNDTES…EFSQRALFLT (1161 aa)) lie on the Extracellular side of the membrane. The NIDO domain occupies 260–415 (GIYFRLDRDL…GRHIFRIDEN (156 aa)). Positions 647-798 (GQRWSNSMCN…VGCETFRFER (152 aa)) constitute an AMOP domain. The region spanning 811-1019 (GVAGIFGDPH…HWQLTDREQR (209 aa)) is the VWFD domain. One can recognise a Sushi domain in the interval 1110–1170 (ISCGILETPR…PDYGYTECLR (61 aa)). 2 cysteine pairs are disulfide-bonded: Cys1112/Cys1152 and Cys1138/Cys1168. The helical transmembrane segment at 1183 to 1203 (WGVIVAVILPLGLLICLLWFW) threads the bilayer. Over 1204-1472 (CWHKPRSEGK…QEYSSRTLGA (269 aa)) the chain is Cytoplasmic. The span at 1232-1250 (LRSSSMGNITDTMKSSTIP) shows a compositional bias: polar residues. A disordered region spans residues 1232-1448 (LRSSSMGNIT…IPEAPKSAPV (217 aa)). Residues 1291 to 1300 (GKSDSGKSDK) are compositionally biased toward basic and acidic residues. Positions 1405-1416 (PIPSQYSPTYSE) are enriched in polar residues. The helical transmembrane segment at 1473–1493 (TWGIISAVMLPIIIILICVAW) threads the bilayer. The Extracellular segment spans residues 1494-1583 (RILQRRKAEE…RQWGGETEIN (90 aa)). Positions 1521 to 1539 (DSVKVTSDDESIPYKKDVT) are enriched in basic and acidic residues. The disordered stretch occupies residues 1521 to 1583 (DSVKVTSDDE…RQWGGETEIN (63 aa)).

In fifth instar larvae, expressed in midgut epithelial cells (at protein level).

It localises to the membrane. Its subcellular location is the cell junction. It is found in the septate junction. The protein resides in the lateral cell membrane. May be required for the proper organization of smooth septate junctions and for the barrier function of the midgut epithelium. This chain is Protein mesh, found in Bombyx mori (Silk moth).